The primary structure comprises 764 residues: MEEKELRQDLYECVSLLDVAHFNCCLGNENNAKQQCLEIVKILNRLSKTKAFKEGYHSIIKDISSYTLKFYDSIDKGNHFTYSEKIMWLSSKLYGEFYPPLTVYSHKLDSFHSYLLPIQKVIKEKTDILPLPESLNAHYEQVDIKNWTLDYNALSELYQDLLTNCSFVSSLLSIVELDRKDLLENLISPRQDSSIFKCQLYFNGSSRLVTIDNTLPFLNDSNRNLTINSNENLYWPALVEKAYLKVLGSGYKFEGSNMAIDTYMLTTWIPEIVPINNSKLYDCDDVWENYLSKSVLLGIGTGKLSVELSKKLNFISGHDYLVTSFDPITHTIVLKNPWIENDNSYKRTLTISDQDLHHFKYFYINWNPNAFFKYKFHMTFIYNVKDNTGTHMYQKPQFSLLNPTEDSQNVWLLLEKHLPLKNFSEQLINILIYETQLGDKVIVSNQCIRANKDSSTNSRLMLLKFTMKPKQAYTIVISSTIANTFTLNMYNNISRDFTFTKAKFKYPTTIPTFKDKWTSDNSGGNWSLSTYIDNPQYDIEVKTLPTNIMIGLFSEFKDKFVNFHIFQSDPSGKGHRIRLFDKSKLLVNEKYSMTYQFEDFKSLQPGFYKIVASAFDNNLNGAFELLAIHDSPPNNISITKIHPSLGLFLQKKEFDWNSSNRFKLYFKATQFSSRFTFHLKHYSHINKNTESLSDYRPFIRGSIFDAENSQPIQINEEWNDSLYGLFIDCDIQKPKTYILLVERFESGSGRCKVDIGCNRKFNIL.

The Calpain catalytic domain maps to 95–368 (GEFYPPLTVY…FKYFYINWNP (274 aa)). Active-site residues include Cys-165, His-318, and Asn-336.

It belongs to the peptidase C2 family. PalB/RIM13 subfamily.

Functionally, required for the proteolytic cleavage of the transcription factor RIM101 in response to alkaline ambient pH. In Debaryomyces hansenii (strain ATCC 36239 / CBS 767 / BCRC 21394 / JCM 1990 / NBRC 0083 / IGC 2968) (Yeast), this protein is Calpain-like protease palB/RIM13.